The sequence spans 641 residues: RING finger containing E3 ubiquitin-protein ligase WSV403 (641 aa).

An RING-type; atypical zinc finger spans residues 329 to 371 (CVGCLYDIEDEKRCYKLPCGHFMHTFCLSNKCSKANFRCVKCF).

It carries out the reaction S-ubiquitinyl-[E2 ubiquitin-conjugating enzyme]-L-cysteine + [acceptor protein]-L-lysine = [E2 ubiquitin-conjugating enzyme]-L-cysteine + N(6)-ubiquitinyl-[acceptor protein]-L-lysine.. The protein operates within protein modification; protein ubiquitination. Its function is as follows. Probable E3 ubiquitin-protein ligase which accepts ubiquitin from an E2 ubiquitin-conjugating enzyme in the form of a thioester and then directly transfers the ubiquitin to targeted substrates. This chain is RING finger containing E3 ubiquitin-protein ligase WSV403, found in White spot syndrome virus (isolate Shrimp/China/Tongan/1996) (WSSV).